Here is a 181-residue protein sequence, read N- to C-terminus: uncharacterized protein (181 aa).

This is an uncharacterized protein from Acanthamoeba polyphaga (Amoeba).